A 550-amino-acid chain; its full sequence is Hydroxylamine reductase (550 aa).

[4Fe-4S] cluster is bound by residues C5, C8, C17, and C23. The hybrid [4Fe-2O-2S] cluster site is built by H250, E274, C319, C405, C433, C458, E492, and K494. Residue C405 is modified to Cysteine persulfide.

The protein belongs to the HCP family. Requires [4Fe-4S] cluster as cofactor. It depends on hybrid [4Fe-2O-2S] cluster as a cofactor.

The protein localises to the cytoplasm. The catalysed reaction is A + NH4(+) + H2O = hydroxylamine + AH2 + H(+). Its function is as follows. Catalyzes the reduction of hydroxylamine to form NH(3) and H(2)O. This is Hydroxylamine reductase from Geobacter sulfurreducens (strain ATCC 51573 / DSM 12127 / PCA).